The primary structure comprises 355 residues: Protein-glutamate methylesterase/protein-glutamine glutaminase 3 (355 aa).

The Response regulatory domain maps to 8–126; that stretch reads RVLVVDDSPT…AEELRRWGKE (119 aa). Residue Asp59 is modified to 4-aspartylphosphate. Residues 152–337 form the CheB-type methylesterase domain; that stretch reads PPTGARVDIF…LASMPELILQ (186 aa). Residues Ser166, His193, and Asp284 contribute to the active site.

The protein belongs to the CheB family. Post-translationally, phosphorylated by CheA. Phosphorylation of the N-terminal regulatory domain activates the methylesterase activity.

Its subcellular location is the cytoplasm. It carries out the reaction [protein]-L-glutamate 5-O-methyl ester + H2O = L-glutamyl-[protein] + methanol + H(+). The enzyme catalyses L-glutaminyl-[protein] + H2O = L-glutamyl-[protein] + NH4(+). Involved in chemotaxis. Part of a chemotaxis signal transduction system that modulates chemotaxis in response to various stimuli. Catalyzes the demethylation of specific methylglutamate residues introduced into the chemoreceptors (methyl-accepting chemotaxis proteins or MCP) by CheR. Also mediates the irreversible deamidation of specific glutamine residues to glutamic acid. The sequence is that of Protein-glutamate methylesterase/protein-glutamine glutaminase 3 from Myxococcus xanthus (strain DK1622).